The following is a 261-amino-acid chain: NAD-capped RNA hydrolase NudC (261 aa).

Residues K25 and R69 each contribute to the substrate site. The Zn(2+) site is built by C98 and C101. E111 provides a ligand contact to substrate. Zn(2+)-binding residues include C116 and C119. A substrate-binding site is contributed by Y124. Positions 125-248 constitute a Nudix hydrolase domain; it reads PQIAPCVIVA…TVARRLIEDT (124 aa). Positions 158, 174, and 178 each coordinate a divalent metal cation. Residues 159-180 carry the Nudix box motif; it reads GFVEVGETLEQAVSREVLEESN. 192 to 199 contacts substrate; that stretch reads QPWPFPHS. E219 lines the a divalent metal cation pocket. A241 lines the substrate pocket.

Belongs to the Nudix hydrolase family. NudC subfamily. In terms of assembly, homodimer. Requires Mg(2+) as cofactor. It depends on Mn(2+) as a cofactor. The cofactor is Zn(2+).

It carries out the reaction a 5'-end NAD(+)-phospho-ribonucleoside in mRNA + H2O = a 5'-end phospho-adenosine-phospho-ribonucleoside in mRNA + beta-nicotinamide D-ribonucleotide + 2 H(+). The enzyme catalyses NAD(+) + H2O = beta-nicotinamide D-ribonucleotide + AMP + 2 H(+). It catalyses the reaction NADH + H2O = reduced beta-nicotinamide D-ribonucleotide + AMP + 2 H(+). In terms of biological role, mRNA decapping enzyme that specifically removes the nicotinamide adenine dinucleotide (NAD) cap from a subset of mRNAs by hydrolyzing the diphosphate linkage to produce nicotinamide mononucleotide (NMN) and 5' monophosphate mRNA. The NAD-cap is present at the 5'-end of some mRNAs and stabilizes RNA against 5'-processing. Has preference for mRNAs with a 5'-end purine. Catalyzes the hydrolysis of a broad range of dinucleotide pyrophosphates. The protein is NAD-capped RNA hydrolase NudC of Yersinia enterocolitica serotype O:8 / biotype 1B (strain NCTC 13174 / 8081).